Reading from the N-terminus, the 194-residue chain is GTP cyclohydrolase 1 (194 aa).

Zn(2+)-binding residues include Cys83, His86, and Cys155.

This sequence belongs to the GTP cyclohydrolase I family. In terms of assembly, homomer.

The enzyme catalyses GTP + H2O = 7,8-dihydroneopterin 3'-triphosphate + formate + H(+). Its pathway is cofactor biosynthesis; 7,8-dihydroneopterin triphosphate biosynthesis; 7,8-dihydroneopterin triphosphate from GTP: step 1/1. This is GTP cyclohydrolase 1 from Streptococcus pyogenes serotype M49 (strain NZ131).